A 992-amino-acid polypeptide reads, in one-letter code: Disks large-associated protein 4 (992 aa).

The segment covering 1–20 (MKGLGDSRPRHLSDSLDPPH) has biased composition (basic and acidic residues). Disordered regions lie at residues 1 to 31 (MKGL…DRNP) and 154 to 226 (APSM…ASGL). The segment covering 162–171 (GKVGGNGGKK) has biased composition (gly residues). A compositionally biased stretch (basic and acidic residues) spans 172 to 194 (GVLEDGKGRRAKSKERAKAGEPK). The span at 199–208 (SNISGWWSSD) shows a compositional bias: polar residues. A phosphoserine mark is found at Ser-206 and Ser-207. Residue Arg-290 is modified to Omega-N-methylarginine. Disordered stretches follow at residues 342–435 (TTLL…SWEE), 527–665 (SVSL…RKLS), 677–751 (VPKE…GPRQ), 763–798 (SYGD…AQPG), and 915–992 (TPEK…QTRL). 7 positions are modified to phosphoserine: Ser-377, Ser-380, Ser-384, Ser-388, Ser-405, Ser-415, and Ser-421. Residues 399 to 413 (LRATQQSLGEQSNPR) show a composition bias toward polar residues. A compositionally biased stretch (low complexity) spans 528–554 (VSLQSLSPPPSTGSLSNSRTLPSSSCL). The segment covering 576 to 591 (VTVQSSTESAQDTYLD) has biased composition (polar residues). Phosphoserine occurs at positions 580, 581, 609, 611, 665, and 744. Positions 600–620 (TSQSGLSNSSDSLDSSTRPPS) are enriched in low complexity. Residue Thr-915 is modified to Phosphothreonine. Basic and acidic residues-rich tracts occupy residues 915 to 925 (TPEKRKEEKKP) and 940 to 958 (VSRD…EARK). The span at 969–978 (VRQNSATESA) shows a compositional bias: polar residues. At Ser-973 the chain carries Phosphoserine.

Belongs to the SAPAP family. Interacts with DLG1 and DLG4/PSD-95. In terms of tissue distribution, expressed in brain.

The protein resides in the membrane. Its function is as follows. May play a role in the molecular organization of synapses and neuronal cell signaling. Could be an adapter protein linking ion channel to the subsynaptic cytoskeleton. May induce enrichment of PSD-95/SAP90 at the plasma membrane. The chain is Disks large-associated protein 4 (Dlgap4) from Rattus norvegicus (Rat).